Reading from the N-terminus, the 429-residue chain is Adenylosuccinate synthetase (429 aa).

GTP is bound by residues 12–18 (GDEGKGK) and 40–42 (GHT). D13 serves as the catalytic Proton acceptor. Mg(2+) contacts are provided by D13 and G40. Residues 13–16 (DEGK), 38–41 (NAGH), T129, R143, Q223, T238, and R302 contribute to the IMP site. H41 acts as the Proton donor in catalysis. 298 to 304 (TVTGRKR) is a binding site for substrate. Residues R304, 330-332 (KLD), and 412-414 (STS) contribute to the GTP site.

This sequence belongs to the adenylosuccinate synthetase family. In terms of assembly, homodimer. The cofactor is Mg(2+).

The protein localises to the cytoplasm. The catalysed reaction is IMP + L-aspartate + GTP = N(6)-(1,2-dicarboxyethyl)-AMP + GDP + phosphate + 2 H(+). It participates in purine metabolism; AMP biosynthesis via de novo pathway; AMP from IMP: step 1/2. Plays an important role in the de novo pathway of purine nucleotide biosynthesis. Catalyzes the first committed step in the biosynthesis of AMP from IMP. This is Adenylosuccinate synthetase from Novosphingobium aromaticivorans (strain ATCC 700278 / DSM 12444 / CCUG 56034 / CIP 105152 / NBRC 16084 / F199).